The chain runs to 371 residues: Transcription termination/antitermination protein NusA (371 aa).

The S1 motif domain occupies 135 to 199; that stretch reads EDIMTGIVQR…KGPQIYVSRT (65 aa). A KH domain is found at 301–367; the sequence is EKATTVIVPD…EPLFTEPETA (67 aa). The interval 347–371 is disordered; that stretch reads GIYPRELEEDDEPLFTEPETAESDE. Positions 353 to 371 are enriched in acidic residues; it reads LEEDDEPLFTEPETAESDE.

The protein belongs to the NusA family. In terms of assembly, monomer. Binds directly to the core enzyme of the DNA-dependent RNA polymerase and to nascent RNA.

Its subcellular location is the cytoplasm. Its function is as follows. Participates in both transcription termination and antitermination. The sequence is that of Transcription termination/antitermination protein NusA from Bacillus subtilis (strain 168).